The following is a 275-amino-acid chain: Undecaprenyl-diphosphatase (275 aa).

8 consecutive transmembrane segments (helical) span residues 1–21 (MDWV…FLPI), 42–62 (VKDA…LVYY), 80–100 (TLWT…LAFG), 107–127 (LFKP…MWLI), 147–167 (SLLI…SRSA), 184–204 (TKFS…LNLV), 214–234 (IGLL…YLAI), and 249–269 (FAVY…TGVM).

Belongs to the UppP family.

The protein resides in the cell membrane. It catalyses the reaction di-trans,octa-cis-undecaprenyl diphosphate + H2O = di-trans,octa-cis-undecaprenyl phosphate + phosphate + H(+). In terms of biological role, catalyzes the dephosphorylation of undecaprenyl diphosphate (UPP). Confers resistance to bacitracin. The protein is Undecaprenyl-diphosphatase of Deinococcus deserti (strain DSM 17065 / CIP 109153 / LMG 22923 / VCD115).